We begin with the raw amino-acid sequence, 217 residues long: DNA-binding transcriptional activator DevR/DosR (217 aa).

The 117-residue stretch at 3–119 (KVFLVDDHEV…ELARAVKDVG (117 aa)) folds into the Response regulatory domain. Asp54 carries the post-translational modification 4-aspartylphosphate. Residues 143-208 (KQDPLSGLTD…QAAVFATELK (66 aa)) enclose the HTH luxR-type domain. Residues 167-186 (NKQIADRMFLAEKTVKNYVS) constitute a DNA-binding region (H-T-H motif). Residues Thr198 and Thr205 each carry the phosphothreonine; by PknH modification.

Homodimer. Interacts with NarL. Post-translationally, phosphorylated on Asp-54 by both DevS (DosS) and DosT. Phosphorylated on Thr-198 and Thr-205 by PknH, which enhances DevR dimerization. Aspartate phosphorylation and threonine phosphorylation cooperatively enhance DevR binding to DNA.

The protein resides in the cytoplasm. The protein localises to the host cytoplasmic vesicle. It is found in the host phagosome. Functionally, member of the two-component regulatory system DevR/DevS (also called DosR/DosS) involved in onset of the dormancy response. Regulates an approximately 48-member regulon. When phosphorylated binds and activates the promoter of DevR regulon genes in response to hypoxia. The presence of target DNA increases stability of phospho-DevR in vitro. Activates its own transcription under hypoxic but not aerobic conditions, probably binds as a dimer to tandem binding sites within the devR and hspX promoters. Accepts a phosphate group from DevS (DosS) and from DosT. Does not regulate transcription of dosT. The polypeptide is DNA-binding transcriptional activator DevR/DosR (Mycobacterium tuberculosis (strain ATCC 25618 / H37Rv)).